The following is a 231-amino-acid chain: Phosphoheptose isomerase (231 aa).

The SIS domain maps to 35 to 190 (LAAVLGGGGR…CAAFDAALER (156 aa)). 50 to 52 (NGG) provides a ligand contact to substrate. Residues histidine 59 and glutamate 63 each coordinate Zn(2+). Substrate contacts are provided by residues glutamate 63, 92–93 (ND), 118–120 (STS), serine 123, and glutamine 170. Glutamine 170 and histidine 178 together coordinate Zn(2+). Composition is skewed to low complexity over residues 197–206 (AAGSAASTGR) and 214–225 (ASTGRAAGAGRA). Residues 197-231 (AAGSAASTGRAARRERAASTGRAAGAGRAAQRKRR) are disordered.

This sequence belongs to the SIS family. GmhA subfamily. Requires Zn(2+) as cofactor.

It is found in the cytoplasm. It catalyses the reaction 2 D-sedoheptulose 7-phosphate = D-glycero-alpha-D-manno-heptose 7-phosphate + D-glycero-beta-D-manno-heptose 7-phosphate. The protein operates within carbohydrate biosynthesis; D-glycero-D-manno-heptose 7-phosphate biosynthesis; D-glycero-alpha-D-manno-heptose 7-phosphate and D-glycero-beta-D-manno-heptose 7-phosphate from sedoheptulose 7-phosphate: step 1/1. Functionally, catalyzes the isomerization of sedoheptulose 7-phosphate in D-glycero-D-manno-heptose 7-phosphate. The sequence is that of Phosphoheptose isomerase from Streptomyces coelicolor (strain ATCC BAA-471 / A3(2) / M145).